Consider the following 372-residue polypeptide: Alanine dehydrogenase 1 (372 aa).

Residue His94 is part of the active site. 170-200 (TYVIFGGGVAATNAANVALGLNAKVIIIELN) contacts NAD(+).

The protein belongs to the AlaDH/PNT family.

It catalyses the reaction L-alanine + NAD(+) + H2O = pyruvate + NH4(+) + NADH + H(+). It participates in amino-acid degradation; L-alanine degradation via dehydrogenase pathway; NH(3) and pyruvate from L-alanine: step 1/1. In terms of biological role, may play a role in cell wall synthesis as L-alanine is an important constituent of the peptidoglycan layer. This is Alanine dehydrogenase 1 (ald1) from Staphylococcus aureus (strain bovine RF122 / ET3-1).